A 558-amino-acid chain; its full sequence is Kelch-like protein 23 (558 aa).

The 69-residue stretch at 36 to 104 (TDITLQCPSG…AYTSQIEITK (69 aa)) folds into the BTB domain. Residues 139 to 240 (CIGMHSFAEF…DPVYLKTALG (102 aa)) enclose the BACK domain. Kelch repeat units lie at residues 274–320 (TMYI…CLGP), 321–369 (NIYV…TLGG), 370–416 (CVYA…VLHE), 418–466 (IYVI…PFEN), 467–508 (KLYL…IMNG), and 510–557 (IYVT…CVYN).

This chain is Kelch-like protein 23 (Klhl23), found in Mus musculus (Mouse).